The primary structure comprises 180 residues: MCDLVARTGRLQQRYEDGSRLVAGCIPFRYVNSDKDGNSESGKVIQVLMISSSSGPGLLFPKGGWENDETVREAAAREAVEEAGVRGILMDFLGNYEFKSKSHQDEFSPEGLCKAAMYALYVKEELATWPEHETRTRKWLTIEEAVESCRHPWMKDALVEGFCKWHKEKMVKGEEITGEH.

Residues 18–162 enclose the Nudix hydrolase domain; it reads GSRLVAGCIP…WMKDALVEGF (145 aa). A substrate-binding site is contributed by F60. Positions 63, 78, 82, and 144 each coordinate Mn(2+). Residues 63-84 carry the Nudix box motif; sequence GGWENDETVREAAAREAVEEAG.

It belongs to the Nudix hydrolase family. The cofactor is Mg(2+). Mn(2+) is required as a cofactor. As to expression, expressed in roots, leaves, stems and inflorescences.

Its subcellular location is the mitochondrion. In terms of biological role, probably mediates the hydrolysis of some nucleoside diphosphate derivatives. The protein is Nudix hydrolase 16, mitochondrial (NUDT16) of Arabidopsis thaliana (Mouse-ear cress).